Consider the following 398-residue polypeptide: Carbamoyl phosphate synthase small chain (398 aa).

The interval 1–199 (MTPAWATEKP…WNEGFGEQAE (199 aa)) is CPSase. L-glutamine is bound by residues S54, G251, and G253. The region spanning 203 to 391 (HVVAIDYGVK…VNLIREKRGE (189 aa)) is the Glutamine amidotransferase type-1 domain. The active-site Nucleophile is the C280. Residues L281, Q284, N322, G324, and F325 each contribute to the L-glutamine site. Active-site residues include H364 and E366.

Belongs to the CarA family. Composed of two chains; the small (or glutamine) chain promotes the hydrolysis of glutamine to ammonia, which is used by the large (or ammonia) chain to synthesize carbamoyl phosphate. Tetramer of heterodimers (alpha,beta)4.

It catalyses the reaction hydrogencarbonate + L-glutamine + 2 ATP + H2O = carbamoyl phosphate + L-glutamate + 2 ADP + phosphate + 2 H(+). The enzyme catalyses L-glutamine + H2O = L-glutamate + NH4(+). It functions in the pathway amino-acid biosynthesis; L-arginine biosynthesis; carbamoyl phosphate from bicarbonate: step 1/1. Its pathway is pyrimidine metabolism; UMP biosynthesis via de novo pathway; (S)-dihydroorotate from bicarbonate: step 1/3. Its function is as follows. Small subunit of the glutamine-dependent carbamoyl phosphate synthetase (CPSase). CPSase catalyzes the formation of carbamoyl phosphate from the ammonia moiety of glutamine, carbonate, and phosphate donated by ATP, constituting the first step of 2 biosynthetic pathways, one leading to arginine and/or urea and the other to pyrimidine nucleotides. The small subunit (glutamine amidotransferase) binds and cleaves glutamine to supply the large subunit with the substrate ammonia. This Mesorhizobium japonicum (strain LMG 29417 / CECT 9101 / MAFF 303099) (Mesorhizobium loti (strain MAFF 303099)) protein is Carbamoyl phosphate synthase small chain.